The sequence spans 604 residues: Elongation factor 4 (604 aa).

The 183-residue stretch at 2 to 184 (DHIRNFSIIA…AVITRMPAPR (183 aa)) folds into the tr-type G domain. Residues 14–19 (DHGKST) and 131–134 (NKMD) contribute to the GTP site.

Belongs to the TRAFAC class translation factor GTPase superfamily. Classic translation factor GTPase family. LepA subfamily.

The protein resides in the cell inner membrane. It catalyses the reaction GTP + H2O = GDP + phosphate + H(+). Required for accurate and efficient protein synthesis under certain stress conditions. May act as a fidelity factor of the translation reaction, by catalyzing a one-codon backward translocation of tRNAs on improperly translocated ribosomes. Back-translocation proceeds from a post-translocation (POST) complex to a pre-translocation (PRE) complex, thus giving elongation factor G a second chance to translocate the tRNAs correctly. Binds to ribosomes in a GTP-dependent manner. The sequence is that of Elongation factor 4 from Methylibium petroleiphilum (strain ATCC BAA-1232 / LMG 22953 / PM1).